The primary structure comprises 140 residues: Protein PsiE homolog (140 aa).

4 consecutive transmembrane segments (helical) span residues 16-36 (IVLQ…LSVF), 57-77 (YHLI…VMII), 85-105 (HFPL…LIII), and 110-130 (PLDL…LFIA).

The protein belongs to the PsiE family.

Its subcellular location is the cell membrane. In Bacillus cereus (strain ATCC 14579 / DSM 31 / CCUG 7414 / JCM 2152 / NBRC 15305 / NCIMB 9373 / NCTC 2599 / NRRL B-3711), this protein is Protein PsiE homolog.